The chain runs to 589 residues: Splicing factor U2af large subunit B (589 aa).

Positions 1–195 are disordered; the sequence is MMSYEGNGDG…KRRSGFDMAP (195 aa). The segment covering 14–27 has biased composition (polar residues); it reads STENHNENYISLES. Composition is skewed to basic and acidic residues over residues 29-100 and 109-145; these read PFHE…DRQR and RDRS…DREV. 2 stretches are compositionally biased toward basic residues: residues 146–156 and 164–188; these read RHRRRSRSRSR and RSEH…SKRR. RRM domains are found at residues 255–338, 375–453, and 494–580; these read RRVY…RPTD, DRIF…RAIQ, and QVVT…YPED.

Belongs to the splicing factor SR family. As to quaternary structure, component of the spliceosome. Interacts with SF1 in the nucleus.

It is found in the nucleus. The protein resides in the nucleus speckle. Its function is as follows. Necessary for the splicing of pre-mRNA. The protein is Splicing factor U2af large subunit B of Arabidopsis thaliana (Mouse-ear cress).